The chain runs to 215 residues: Heart- and neural crest derivatives-expressed protein 1 (215 aa).

Disordered regions lie at residues 53 to 109 (APDF…RTES) and 169 to 202 (VDGGRESKRKRELQQHEGFPPALGPGEKRIKGRT). Residues 65 to 75 (AAAAAATYGPD) are compositionally biased toward low complexity. Positions 92–104 (LGRRKGSGPKKER) are enriched in basic residues. One can recognise a bHLH domain in the interval 94-146 (RRKGSGPKKERRRTESINSAFAELRECIPNVPADTKLSKIKTLRLATSYIAYL). Thr107 is subject to Phosphothreonine; by PLK4. Ser109 carries the post-translational modification Phosphoserine; by PLK4.

As to quaternary structure, efficient DNA binding requires dimerization with another bHLH protein. Forms homodimers and heterodimers with TCF3 gene products E12 and E47, HAND2 and HEY1, HEY2 and HEYL (hairy-related transcription factors). Interacts with MDFIC. Interacts with SOX15; the interaction enhances HAND1-induced differentiation of trophoblast giant cells. In terms of processing, phosphorylation by PLK4 disrupts the interaction with MDFIC and leads to translocation into the nucleoplasm, allowing dimerization and transcription factor activity.

It is found in the nucleus. It localises to the nucleoplasm. Its subcellular location is the nucleolus. Its function is as follows. Transcription factor that plays an essential role in both trophoblast giant cell differentiation and in cardiac morphogenesis. Binds the DNA sequence 5'-NRTCTG-3' (non-canonical E-box). Acts as a transcriptional repressor of SOX15. In the adult, could be required for ongoing expression of cardiac-specific genes. This is Heart- and neural crest derivatives-expressed protein 1 (HAND1) from Oryctolagus cuniculus (Rabbit).